A 106-amino-acid chain; its full sequence is Nucleoid-associated protein XAC1110 (106 aa).

Basic and acidic residues predominate over residues 80–89 (KIDAESKDRM). The disordered stretch occupies residues 80–106 (KIDAESKDRMGSATAGMQLPPGMKLPF).

This sequence belongs to the YbaB/EbfC family. Homodimer.

The protein resides in the cytoplasm. The protein localises to the nucleoid. Its function is as follows. Binds to DNA and alters its conformation. May be involved in regulation of gene expression, nucleoid organization and DNA protection. The polypeptide is Nucleoid-associated protein XAC1110 (Xanthomonas axonopodis pv. citri (strain 306)).